A 503-amino-acid polypeptide reads, in one-letter code: Ell-associated factor Eaf (503 aa).

Polar residues-rich tracts occupy residues Pro143–Ala158 and Glu170–Asn189. Disordered stretches follow at residues Pro143–Asp223 and Asn251–Asp503. A Phosphoserine modification is found at Ser199. The segment covering Asn251–Ser264 has biased composition (polar residues). The segment covering Gly281–Gln296 has biased composition (basic residues). Over residues Arg297 to Arg311 the composition is skewed to polar residues. Residues Asn312–His326 show a composition bias toward low complexity. Positions Asp382–Glu397 are enriched in acidic residues. Composition is skewed to low complexity over residues Met415–His435 and Asn484–Ser497.

The protein belongs to the EAF family.

The protein resides in the nucleus. Promotes transcriptional elongation by Su(Tpl)/ELL. Essential for development. The sequence is that of Ell-associated factor Eaf from Drosophila ananassae (Fruit fly).